The chain runs to 585 residues: Efflux pump dotC (585 aa).

The span at Met1–Glu34 shows a compositional bias: basic and acidic residues. The disordered stretch occupies residues Met1 to Leu45. Residue Asn10 is glycosylated (N-linked (GlcNAc...) asparagine). Residues Glu35–Ala44 show a composition bias toward acidic residues. A helical transmembrane segment spans residues Ser51–Leu71. The N-linked (GlcNAc...) asparagine glycan is linked to Asn91. Helical transmembrane passes span Ala94–Trp114, Ala132–Thr152, Gly158–Leu178, Gly186–Phe206, Trp214–Leu234, Phe247–Phe267, Ser280–Val300, Ala323–Leu343, Pro353–Ala373, Leu385–Phe405, Leu414–Val434, Thr449–Tyr471, and Ser524–Val544. Residues Lys564–Ser585 form a disordered region.

This sequence belongs to the major facilitator superfamily. TCR/Tet family.

Its subcellular location is the cell membrane. The protein resides in the vacuole membrane. Its function is as follows. Efflux pump; part of the gene cluster that mediates the biosynthesis of dothistromin (DOTH), a polyketide toxin very similar in structure to the aflatoxin precursor, versicolorin B. One function of dotC may be to transport early-stage dothistromin biosynthetic intermediates from the cytoplasm into vacuoles, thereby affecting the rate of dothistromin production. In Dothistroma septosporum (Red band needle blight fungus), this protein is Efflux pump dotC.